A 226-amino-acid polypeptide reads, in one-letter code: Lysoplasmalogenase TMEM86B (226 aa).

At 1–23 (MDPGKEGLPRKPRFSAQQLHVGK) the chain is on the cytoplasmic side. The helical transmembrane segment at 24-40 (WLSPFFFTCAVYFLLWI) threads the bilayer. Topologically, residues 41–46 (PDDQPS) are extracellular. Residues 47–64 (WVGALVKCLPVLSLVVFL) form a helical membrane-spanning segment. Residues 65–76 (RAVDAGGGYSAR) are Cytoplasmic-facing. Residues 77 to 93 (LQGALLCSAVGDACLVW) traverse the membrane as a helical segment. Residues 94 to 99 (PEAFLH) are Extracellular-facing. A helical membrane pass occupies residues 100 to 117 (GVAAFAAAHLLYLWAFGL). Topologically, residues 118-123 (TPLQPG) are cytoplasmic. The chain crosses the membrane as a helical span at residues 124–140 (LLLLVILAALPYYGLLL). Over 141–146 (WHLPPD) the chain is Extracellular. A helical transmembrane segment spans residues 147-163 (LVLALTAYSLALATMLW). Over 164 to 171 (RGLARGGS) the chain is Cytoplasmic. A helical transmembrane segment spans residues 172–188 (TGWGALLFTLSDTTLAW). Over 189–199 (NAFAQPLPHAR) the chain is Extracellular. A helical transmembrane segment spans residues 200–217 (LVVMTTYYSAQVLISLSV). At 218–226 (SQSPKLKPN) the chain is on the cytoplasmic side.

This sequence belongs to the TMEM86 family. In terms of assembly, homodimer.

Its subcellular location is the endoplasmic reticulum membrane. The protein resides in the cytoplasm. It catalyses the reaction a 1-O-(1Z-alkenyl)-sn-glycero-3-phosphocholine + H2O = a 2,3-saturated aldehyde + sn-glycerol 3-phosphocholine. The enzyme catalyses a 1-O-(1Z-alkenyl)-sn-glycero-3-phosphoethanolamine + H2O = a 2,3-saturated aldehyde + sn-glycero-3-phosphoethanolamine. With respect to regulation, competitively inhibited by lysophosphatidic acid. In terms of biological role, catalyzes the hydrolysis of the vinyl ether bond of choline or ethanolamine lysoplasmalogens, forming fatty aldehyde and glycerophosphocholine or glycerophosphoethanolamine, respectively and is specific for the sn-2-deacylated (lyso) form of plasmalogen. This Sus scrofa (Pig) protein is Lysoplasmalogenase TMEM86B (TMEM86B).